The chain runs to 209 residues: Small ribosomal subunit protein uS4 (209 aa).

Positions 1–13 (MSTKSRTRSKTRL) are enriched in basic residues. Disordered stretches follow at residues 1-20 (MSTKSRTRSKTRLSRALGIP) and 28-49 (YLEKRPYAPGEHGRSKRKQDSD). Residues 95-176 (QRLDALVVRS…PKLPSYLEVE (82 aa)) form the S4 RNA-binding domain.

It belongs to the universal ribosomal protein uS4 family. Part of the 30S ribosomal subunit. Contacts protein S5. The interaction surface between S4 and S5 is involved in control of translational fidelity.

Functionally, one of the primary rRNA binding proteins, it binds directly to 16S rRNA where it nucleates assembly of the body of the 30S subunit. In terms of biological role, with S5 and S12 plays an important role in translational accuracy. The protein is Small ribosomal subunit protein uS4 of Clavibacter michiganensis subsp. michiganensis (strain NCPPB 382).